A 723-amino-acid chain; its full sequence is Malate synthase G (723 aa).

Residues valine 118, 125-126 (RY), serine 274, and arginine 311 contribute to the acetyl-CoA site. Residue arginine 338 is the Proton acceptor of the active site. Residues arginine 338, glutamate 427, and 452-455 (GFLD) each bind glyoxylate. The Mg(2+) site is built by glutamate 427 and aspartate 455. An acetyl-CoA-binding site is contributed by proline 536. Cysteine 617 bears the Cysteine sulfenic acid (-SOH) mark. The Proton donor role is filled by aspartate 631. Cysteine 688 is modified (cysteine sulfenic acid (-SOH)).

This sequence belongs to the malate synthase family. GlcB subfamily. As to quaternary structure, monomer. Mg(2+) is required as a cofactor.

It is found in the cytoplasm. It catalyses the reaction glyoxylate + acetyl-CoA + H2O = (S)-malate + CoA + H(+). It functions in the pathway carbohydrate metabolism; glyoxylate cycle; (S)-malate from isocitrate: step 2/2. In terms of biological role, involved in the glycolate utilization. Catalyzes the condensation and subsequent hydrolysis of acetyl-coenzyme A (acetyl-CoA) and glyoxylate to form malate and CoA. The protein is Malate synthase G of Escherichia coli O6:H1 (strain CFT073 / ATCC 700928 / UPEC).